We begin with the raw amino-acid sequence, 196 residues long: Ribosomal RNA small subunit methyltransferase G (196 aa).

Residues Gly77, Phe82, 127–128, and Arg140 contribute to the S-adenosyl-L-methionine site; that span reads AE.

The protein belongs to the methyltransferase superfamily. RNA methyltransferase RsmG family.

Its subcellular location is the cytoplasm. Functionally, specifically methylates the N7 position of a guanine in 16S rRNA. The chain is Ribosomal RNA small subunit methyltransferase G from Aquifex aeolicus (strain VF5).